Consider the following 476-residue polypeptide: Angiotensinogen (476 aa).

The signal sequence occupies residues 1–24 (MAPAGLSLGAAILCLLAWAGLAAG). A disulfide bridge links Cys-42 with Cys-161. 4 N-linked (GlcNAc...) asparagine glycosylation sites follow: Asn-295, Asn-319, Asn-362, and Asn-401.

It belongs to the serpin family. Post-translationally, in response to low blood pressure, the enzyme renin/REN cleaves angiotensinogen to produce angiotensin-1. Angiotensin-1 is a substrate of ACE (angiotensin converting enzyme) that removes a dipeptide to yield the physiologically active peptide angiotensin-2. Angiotensin-1 and angiotensin-2 can be further processed to generate angiotensin-3, angiotensin-4. Angiotensin 1-9 is cleaved from angiotensin-1 by ACE2 and can be further processed by ACE to produce angiotensin 1-7, angiotensin 1-5 and angiotensin 1-4. Angiotensin 1-7 has also been proposed to be cleaved from angiotensin-2 by ACE2 or from angiotensin-1 by MME (neprilysin). The disulfide bond is labile. Angiotensinogen is present in the circulation in a near 40:60 ratio with the oxidized disulfide-bonded form, which preferentially interacts with receptor-bound renin.

The protein resides in the secreted. In terms of biological role, essential component of the renin-angiotensin system (RAS), a potent regulator of blood pressure, body fluid and electrolyte homeostasis. Acts directly on vascular smooth muscle as a potent vasoconstrictor, affects cardiac contractility and heart rate through its action on the sympathetic nervous system, and alters renal sodium and water absorption through its ability to stimulate the zona glomerulosa cells of the adrenal cortex to synthesize and secrete aldosterone. Acts by binding to angiotensin receptors AGTR1 and AGTR2. Also binds the DEAR/FBXW7-AS1 receptor. Functionally, stimulates aldosterone release. Its function is as follows. Is a ligand for the G-protein coupled receptor MAS1. Has vasodilator and antidiuretic effects. Has an antithrombotic effect that involves MAS1-mediated release of nitric oxide from platelets. The sequence is that of Angiotensinogen (AGT) from Bos taurus (Bovine).